Reading from the N-terminus, the 288-residue chain is Elongation factor Ts (288 aa).

Residues 82 to 85 (TDFV) form an involved in Mg(2+) ion dislocation from EF-Tu region.

It belongs to the EF-Ts family.

The protein localises to the cytoplasm. Its function is as follows. Associates with the EF-Tu.GDP complex and induces the exchange of GDP to GTP. It remains bound to the aminoacyl-tRNA.EF-Tu.GTP complex up to the GTP hydrolysis stage on the ribosome. The polypeptide is Elongation factor Ts (Pelodictyon phaeoclathratiforme (strain DSM 5477 / BU-1)).